We begin with the raw amino-acid sequence, 777 residues long: Semaphorin-3D (777 aa).

The first 37 residues, 1 to 37, serve as a signal peptide directing secretion; sequence MNVTKDENPRSRSQDLHLFHAWMMLIMTVLFLPVTET. The 488-residue stretch at 44–531 folds into the Sema domain; sequence RLKLTYKDLL…SWDGLVQLSL (488 aa). The cysteines at positions 117 and 128 are disulfide-linked. A glycan (N-linked (GlcNAc...) asparagine) is linked at Asn-139. Cystine bridges form between Cys-146–Cys-155, Cys-286–Cys-398, Cys-310–Cys-358, and Cys-534–Cys-552. Residues 533–585 form the PSI domain; the sequence is RCDTYGKACADCCLARDPYCAWDGNACSRYAPTSKRRARRQDVKYGDPITQCW. An Ig-like C2-type domain is found at 592–680; it reads SHETADEKVI…TFIHTIVKLT (89 aa). N-linked (GlcNAc...) asparagine glycans are attached at residues Asn-607 and Asn-724. A disulfide bridge links Cys-665 with Cys-731. Over residues 740-765 the composition is skewed to basic residues; the sequence is RRQRNKGSPKWKHMQEMKKKRNRRHH. The segment at 740–777 is disordered; the sequence is RRQRNKGSPKWKHMQEMKKKRNRRHHRDLDELQRSVAT. The span at 766 to 777 shows a compositional bias: basic and acidic residues; it reads RDLDELQRSVAT.

The protein belongs to the semaphorin family.

It localises to the secreted. Its function is as follows. Induces the collapse and paralysis of neuronal growth cones. Could potentially act as repulsive cues toward specific neuronal populations. Binds to neuropilin. In Mus musculus (Mouse), this protein is Semaphorin-3D (Sema3d).